Consider the following 348-residue polypeptide: L-threonine 3-dehydrogenase (348 aa).

Cys-38 lines the Zn(2+) pocket. Residues Thr-40 and His-43 each act as charge relay system in the active site. His-63, Glu-64, Cys-93, Cys-96, Cys-99, and Cys-107 together coordinate Zn(2+). NAD(+)-binding positions include Ile-175, Asp-195, Arg-200, Leu-263–Ile-265, and Ile-287–Tyr-288.

Belongs to the zinc-containing alcohol dehydrogenase family. As to quaternary structure, homotetramer. It depends on Zn(2+) as a cofactor.

It is found in the cytoplasm. It catalyses the reaction L-threonine + NAD(+) = (2S)-2-amino-3-oxobutanoate + NADH + H(+). It functions in the pathway amino-acid degradation; L-threonine degradation via oxydo-reductase pathway; glycine from L-threonine: step 1/2. In terms of biological role, catalyzes the NAD(+)-dependent oxidation of L-threonine to 2-amino-3-ketobutyrate. In Deinococcus radiodurans (strain ATCC 13939 / DSM 20539 / JCM 16871 / CCUG 27074 / LMG 4051 / NBRC 15346 / NCIMB 9279 / VKM B-1422 / R1), this protein is L-threonine 3-dehydrogenase.